Reading from the N-terminus, the 153-residue chain is UPF0225 protein ETA_15740 (153 aa).

This sequence belongs to the UPF0225 family.

The sequence is that of UPF0225 protein ETA_15740 from Erwinia tasmaniensis (strain DSM 17950 / CFBP 7177 / CIP 109463 / NCPPB 4357 / Et1/99).